A 292-amino-acid polypeptide reads, in one-letter code: Ephrin type-A receptor 4a (292 aa).

ATP contacts are provided by residues 1–9 (IGIGEFGEV) and lysine 27. The Protein kinase domain maps to 1 to 265 (IGIGEFGEVC…QIVNMLDKLI (265 aa)). Residue aspartate 120 is the Proton acceptor of the active site. Tyrosine 153 is modified (phosphotyrosine; by autocatalysis).

It belongs to the protein kinase superfamily. Tyr protein kinase family. Ephrin receptor subfamily. In terms of tissue distribution, widely expressed in the developing nervous system.

It is found in the cell membrane. The protein resides in the early endosome. The catalysed reaction is L-tyrosyl-[protein] + ATP = O-phospho-L-tyrosyl-[protein] + ADP + H(+). Receptor tyrosine kinase which binds membrane-bound ephrin family ligands residing on adjacent cells, leading to contact-dependent bidirectional signaling into neighboring cells. The signaling pathway downstream of the receptor is referred to as forward signaling while the signaling pathway downstream of the ephrin ligand is referred to as reverse signaling. Highly promiscuous, it has the unique property among Eph receptors to bind and to be physiologically activated by both GPI-anchored ephrin-A and transmembrane ephrin-B ligands including efna1 and efnb3. Upon activation by ephrin ligands, modulates cell morphology and integrin-dependent cell adhesion through regulation of the Rac, Rap and Rho GTPases activity. Plays an important role in the development of the nervous system controlling different steps of axonal guidance including the establishment of the corticospinal projections. In Danio rerio (Zebrafish), this protein is Ephrin type-A receptor 4a (epha4a).